We begin with the raw amino-acid sequence, 341 residues long: 4-hydroxy-2-oxovalerate aldolase (341 aa).

One can recognise a Pyruvate carboxyltransferase domain in the interval 5–257 (ITLHDMTLRD…ETGVDVFRIA (253 aa)). A substrate-binding site is contributed by 13–14 (RD). Asp-14 contributes to the Mn(2+) binding site. His-17 functions as the Proton acceptor in the catalytic mechanism. Positions 167 and 196 each coordinate substrate. Residues His-196 and His-198 each coordinate Mn(2+). Tyr-287 is a substrate binding site.

It belongs to the 4-hydroxy-2-oxovalerate aldolase family.

The catalysed reaction is (S)-4-hydroxy-2-oxopentanoate = acetaldehyde + pyruvate. The sequence is that of 4-hydroxy-2-oxovalerate aldolase (mhpE) from Cupriavidus taiwanensis (strain DSM 17343 / BCRC 17206 / CCUG 44338 / CIP 107171 / LMG 19424 / R1) (Ralstonia taiwanensis (strain LMG 19424)).